We begin with the raw amino-acid sequence, 265 residues long: MSDILNTIIATKHQEIAAALASRPLAAVRADAEARGDRRDFVAALRAKHALGKAAVIAEVKKASPSKGVIREDFQPAAIAESYAAHGAACLSVLTDRQYFQGDARYLEDARAACHLPALRKDFIVDEYQVYEARAMGADCILLIAAALELPKMKALEALANELGMAVLVEVHNEEELDAALQLKTELVGVNNRNLRTFEVSLATTLKLLPRITDGRIAVTESGIATVEDVRLMQASGVHTFLVGEAFMREAEPGEALSRLFFAQS.

Belongs to the TrpC family.

It carries out the reaction 1-(2-carboxyphenylamino)-1-deoxy-D-ribulose 5-phosphate + H(+) = (1S,2R)-1-C-(indol-3-yl)glycerol 3-phosphate + CO2 + H2O. It functions in the pathway amino-acid biosynthesis; L-tryptophan biosynthesis; L-tryptophan from chorismate: step 4/5. The sequence is that of Indole-3-glycerol phosphate synthase from Chromobacterium violaceum (strain ATCC 12472 / DSM 30191 / JCM 1249 / CCUG 213 / NBRC 12614 / NCIMB 9131 / NCTC 9757 / MK).